Consider the following 247-residue polypeptide: Dynein axonemal assembly factor 19 (247 aa).

The stretch at leucine 12 to alanine 32 forms a coiled coil.

Belongs to the DNAAF19/PR46b family. As to quaternary structure, homodimer. As to expression, expressed in all cells bearing motile cilia.

It localises to the cytoplasm. It is found in the cell projection. Its subcellular location is the cilium. The protein resides in the flagellum. Functionally, dynein-attachment factor required for cilia motility. In Danio rerio (Zebrafish), this protein is Dynein axonemal assembly factor 19 (dnaaf19).